Consider the following 489-residue polypeptide: CUGBP Elav-like family member 1-A (489 aa).

3 RRM domains span residues 16-99, 108-188, and 404-482; these read IKMF…PADS, RKLF…FADT, and ANLF…LKRS. Positions 183–210 are necessary for oligomerization and EDEN-dependent deadenylation; it reads VKFADTQKDKEQKRMTQQLQQQMQQLNA.

Belongs to the CELF/BRUNOL family. Oligomer. Oligomerization is required for RNA-binding and EDEN-dependent deadenylation. In terms of processing, phosphorylated during oocyte maturation and dephosphorylated following egg activation. Dephosphorylation is calcium dependent and correlates with the increase in the activity of EDEN-dependent deadenylation.

The protein localises to the nucleus. It is found in the cytoplasm. Its function is as follows. RNA-binding protein implicated in the regulation of several post-transcriptional events. May be involved in pre-mRNA alternative splicing, mRNA translation activation and stability. Mediates the rapid and sequence-specific cytoplasmic deadenylation of EDEN-containing maternal mRNAs following fertilization. Binds to AU-rich sequences (AREs) of jun mRNA. Binds to the embryonic deadenylation element (EDEN) motif localized in the 3'-UTR of maternal mRNAs. Binds to RNA containing several repeats of the consensus sequence 5'-UGU-3'. EDEN-dependent deadenylation is enhanced by the presence of an additional cis element composed of three AUU repeats. This Xenopus laevis (African clawed frog) protein is CUGBP Elav-like family member 1-A (cugbp1-a).